A 224-amino-acid chain; its full sequence is A-factor barrier protein 1 (224 aa).

Residues 1–25 form the signal peptide; that stretch reads MIFAPSFSLIKNILLVSFLISHSFA. Residues asparagine 148, asparagine 181, and asparagine 191 are each glycosylated (N-linked (GlcNAc...) asparagine). The GPI-anchor amidated asparagine moiety is linked to residue asparagine 203. The propeptide at 204 to 224 is removed in mature form; the sequence is GAHAKSLYFPMALFGIFAVAL.

The protein belongs to the SRP1/TIP1 family. The GPI-anchor is attached to the protein in the endoplasmic reticulum and serves to target the protein to the cell surface. There, the glucosamine-inositol phospholipid moiety is cleaved off and the GPI-modified mannoprotein is covalently attached via its lipidless GPI glycan remnant to the 1,6-beta-glucan of the outer cell wall layer.

The protein localises to the secreted. Its subcellular location is the cell wall. The protein resides in the membrane. Functionally, MATalpha-specific protein that interferes with a-factor, the pheromone secreted by MATa cells. Contributes to mating efficiency. Acts to bind and sequester a-factor rather than to degrade it, and promotes the efficient mating of MATalpha cells by keeping the a-factor concentration at the plasma membrane within the narrow range needed for accurate pheromone gradient detection. The chain is A-factor barrier protein 1 from Saccharomyces cerevisiae (strain ATCC 204508 / S288c) (Baker's yeast).